The chain runs to 367 residues: Alginate lyase (367 aa).

Positions 1-24 are cleaved as a signal peptide; it reads MTIFKRISSPALLALALFGGAAHA. Residues 63-64, 136-137, and Y254 each bind substrate; these read SK and HT.

The protein belongs to the polysaccharide lyase 5 family.

It is found in the periplasm. It carries out the reaction Eliminative cleavage of alginate to give oligosaccharides with 4-deoxy-alpha-L-erythro-hex-4-enuronosyl groups at their non-reducing ends and beta-D-mannuronate at their reducing end.. In terms of biological role, catalyzes the depolymerization of alginate by cleaving the beta-1,4 glycosidic bond between two adjacent sugar residues via a beta-elimination mechanism. May serve to degrade mislocalized alginate that is trapped in the periplasmic space. This is Alginate lyase from Pseudomonas putida (strain ATCC 700007 / DSM 6899 / JCM 31910 / BCRC 17059 / LMG 24140 / F1).